We begin with the raw amino-acid sequence, 757 residues long: Endonuclease MutS2 (757 aa).

Residue 321 to 328 (GPNMGGKT) participates in ATP binding. One can recognise a Smr domain in the interval 681 to 756 (IDIRGMTVEE…GTGVTVVEVE (76 aa)).

This sequence belongs to the DNA mismatch repair MutS family. MutS2 subfamily. Homodimer. Binds to stalled ribosomes, contacting rRNA.

In terms of biological role, endonuclease that is involved in the suppression of homologous recombination and thus may have a key role in the control of bacterial genetic diversity. Its function is as follows. Acts as a ribosome collision sensor, splitting the ribosome into its 2 subunits. Detects stalled/collided 70S ribosomes which it binds and splits by an ATP-hydrolysis driven conformational change. Acts upstream of the ribosome quality control system (RQC), a ribosome-associated complex that mediates the extraction of incompletely synthesized nascent chains from stalled ribosomes and their subsequent degradation. Probably generates substrates for RQC. The chain is Endonuclease MutS2 from Thermotoga neapolitana (strain ATCC 49049 / DSM 4359 / NBRC 107923 / NS-E).